Here is a 207-residue protein sequence, read N- to C-terminus: LexA repressor (207 aa).

The segment at residues 28–48 (RAEISRELGFKSANAAEEHLK) is a DNA-binding region (H-T-H motif). Catalysis depends on for autocatalytic cleavage activity residues S123 and K160.

This sequence belongs to the peptidase S24 family. Homodimer.

The catalysed reaction is Hydrolysis of Ala-|-Gly bond in repressor LexA.. Functionally, represses a number of genes involved in the response to DNA damage (SOS response), including recA and lexA. In the presence of single-stranded DNA, RecA interacts with LexA causing an autocatalytic cleavage which disrupts the DNA-binding part of LexA, leading to derepression of the SOS regulon and eventually DNA repair. This chain is LexA repressor, found in Haemophilus influenzae (strain 86-028NP).